Consider the following 150-residue polypeptide: SsrA-binding protein (150 aa).

Belongs to the SmpB family.

It localises to the cytoplasm. In terms of biological role, required for rescue of stalled ribosomes mediated by trans-translation. Binds to transfer-messenger RNA (tmRNA), required for stable association of tmRNA with ribosomes. tmRNA and SmpB together mimic tRNA shape, replacing the anticodon stem-loop with SmpB. tmRNA is encoded by the ssrA gene; the 2 termini fold to resemble tRNA(Ala) and it encodes a 'tag peptide', a short internal open reading frame. During trans-translation Ala-aminoacylated tmRNA acts like a tRNA, entering the A-site of stalled ribosomes, displacing the stalled mRNA. The ribosome then switches to translate the ORF on the tmRNA; the nascent peptide is terminated with the 'tag peptide' encoded by the tmRNA and targeted for degradation. The ribosome is freed to recommence translation, which seems to be the essential function of trans-translation. The protein is SsrA-binding protein of Campylobacter jejuni (strain RM1221).